Consider the following 43-residue polypeptide: Protein PsbN (43 aa).

Residues L7 to F27 form a helical membrane-spanning segment.

This sequence belongs to the PsbN family.

Its subcellular location is the cellular thylakoid membrane. May play a role in photosystem I and II biogenesis. This Synechococcus sp. (strain JA-3-3Ab) (Cyanobacteria bacterium Yellowstone A-Prime) protein is Protein PsbN.